A 167-amino-acid polypeptide reads, in one-letter code: NAD(P)H-quinone oxidoreductase subunit I, chloroplastic (167 aa).

4Fe-4S ferredoxin-type domains are found at residues G55–K84 and L95–E124. [4Fe-4S] cluster-binding residues include C64, C67, C70, C74, C104, C107, C110, and C114.

Belongs to the complex I 23 kDa subunit family. In terms of assembly, NDH is composed of at least 16 different subunits, 5 of which are encoded in the nucleus. The cofactor is [4Fe-4S] cluster.

It localises to the plastid. Its subcellular location is the chloroplast thylakoid membrane. The enzyme catalyses a plastoquinone + NADH + (n+1) H(+)(in) = a plastoquinol + NAD(+) + n H(+)(out). The catalysed reaction is a plastoquinone + NADPH + (n+1) H(+)(in) = a plastoquinol + NADP(+) + n H(+)(out). Its function is as follows. NDH shuttles electrons from NAD(P)H:plastoquinone, via FMN and iron-sulfur (Fe-S) centers, to quinones in the photosynthetic chain and possibly in a chloroplast respiratory chain. The immediate electron acceptor for the enzyme in this species is believed to be plastoquinone. Couples the redox reaction to proton translocation, and thus conserves the redox energy in a proton gradient. In Morus indica (Mulberry), this protein is NAD(P)H-quinone oxidoreductase subunit I, chloroplastic.